The sequence spans 563 residues: Lipoprotein LpqB (563 aa).

A signal peptide spans 1 to 19 (MRRMKALTAAMTAALLVSG). Cys-20 carries the N-palmitoyl cysteine lipid modification. Cys-20 carries S-diacylglycerol cysteine lipidation.

This sequence belongs to the LpqB lipoprotein family.

It localises to the cell membrane. In Corynebacterium efficiens (strain DSM 44549 / YS-314 / AJ 12310 / JCM 11189 / NBRC 100395), this protein is Lipoprotein LpqB.